Here is a 180-residue protein sequence, read N- to C-terminus: Urease accessory protein UreE (180 aa).

Residues 71 to 90 (AAPSGAGHGDGEQDGTGAPG) form a disordered region.

The protein belongs to the UreE family.

It localises to the cytoplasm. Its function is as follows. Involved in urease metallocenter assembly. Binds nickel. Probably functions as a nickel donor during metallocenter assembly. The polypeptide is Urease accessory protein UreE (Kocuria rhizophila (strain ATCC 9341 / DSM 348 / NBRC 103217 / DC2201)).